Consider the following 450-residue polypeptide: Bifunctional protein GlmU (450 aa).

A pyrophosphorylase region spans residues 1–226 (MLAVAVLAAG…ADEVNGINNR (226 aa)). Residues 7–10 (LAAG), lysine 21, glutamine 73, and 78–79 (GT) contribute to the UDP-N-acetyl-alpha-D-glucosamine site. A Mg(2+)-binding site is contributed by aspartate 103. UDP-N-acetyl-alpha-D-glucosamine-binding residues include glycine 140, glutamate 155, asparagine 170, and asparagine 224. Asparagine 224 contributes to the Mg(2+) binding site. The interval 227–247 (RQLAQCEALLQQRLRHHWMDE) is linker. The interval 248 to 450 (GVTFIDPESC…TKEGWAERKV (203 aa)) is N-acetyltransferase. UDP-N-acetyl-alpha-D-glucosamine-binding residues include arginine 329 and lysine 347. The Proton acceptor role is filled by histidine 359. The UDP-N-acetyl-alpha-D-glucosamine site is built by tyrosine 362 and asparagine 373. Residues alanine 376, 382 to 383 (NY), alanine 419, and arginine 436 contribute to the acetyl-CoA site.

This sequence in the N-terminal section; belongs to the N-acetylglucosamine-1-phosphate uridyltransferase family. In the C-terminal section; belongs to the transferase hexapeptide repeat family. Homotrimer. Mg(2+) is required as a cofactor.

Its subcellular location is the cytoplasm. It catalyses the reaction alpha-D-glucosamine 1-phosphate + acetyl-CoA = N-acetyl-alpha-D-glucosamine 1-phosphate + CoA + H(+). It carries out the reaction N-acetyl-alpha-D-glucosamine 1-phosphate + UTP + H(+) = UDP-N-acetyl-alpha-D-glucosamine + diphosphate. It functions in the pathway nucleotide-sugar biosynthesis; UDP-N-acetyl-alpha-D-glucosamine biosynthesis; N-acetyl-alpha-D-glucosamine 1-phosphate from alpha-D-glucosamine 6-phosphate (route II): step 2/2. The protein operates within nucleotide-sugar biosynthesis; UDP-N-acetyl-alpha-D-glucosamine biosynthesis; UDP-N-acetyl-alpha-D-glucosamine from N-acetyl-alpha-D-glucosamine 1-phosphate: step 1/1. It participates in bacterial outer membrane biogenesis; LPS lipid A biosynthesis. Catalyzes the last two sequential reactions in the de novo biosynthetic pathway for UDP-N-acetylglucosamine (UDP-GlcNAc). The C-terminal domain catalyzes the transfer of acetyl group from acetyl coenzyme A to glucosamine-1-phosphate (GlcN-1-P) to produce N-acetylglucosamine-1-phosphate (GlcNAc-1-P), which is converted into UDP-GlcNAc by the transfer of uridine 5-monophosphate (from uridine 5-triphosphate), a reaction catalyzed by the N-terminal domain. This chain is Bifunctional protein GlmU, found in Synechococcus sp. (strain CC9605).